A 2003-amino-acid polypeptide reads, in one-letter code: Histone acetyltransferase KAT6A (2003 aa).

Positions 1 to 77 (MVKLANPLYT…LNSYKDPDNP (77 aa)) constitute an SAMD1-like winged helix (WH) domain. The segment at 1 to 144 (MVKLANPLYT…CGGSAAPGFH (144 aa)) is required for activation of RUNX1-1. The required for nuclear localization stretch occupies residues 52–166 (ELSVKDGTIL…HGRLLKDGPL (115 aa)). Residues 95–171 (QSVDWNKLLK…KDGPLYRLNT (77 aa)) enclose the H15 domain. An interaction with PML region spans residues 144 to 663 (HQQLRLAIKR…RKGYGRFLID (520 aa)). K172 carries the post-translational modification N6-acetyllysine. 2 PHD-type zinc fingers span residues 206–265 (IPIC…CKTC) and 262–313 (CKTC…CRPR). The tract at residues 312–663 (PRKKGRKLLQ…RKGYGRFLID (352 aa)) is interaction with RUNX1-1. The interval 336–377 (GRPKNRLKKQNTVSKGPFSKVRTGPGRGRKRKITVSSQSASS) is disordered. N6-acetyllysine occurs at positions 350 and 355. T369 bears the Phosphothreonine; by PKB/AKT1 mark. Position 419 is a phosphoserine (S419). The segment at 439–466 (RKKGNRKSSTSDWPTDNQDGWESKQENE) is disordered. Residues 445–458 (KSSTSDWPTDNQDG) show a composition bias toward polar residues. The residue at position 472 (S472) is a Phosphoserine. A catalytic region spans residues 487 to 777 (IQEQALQKVG…VDPECLRWTP (291 aa)). The MYST-type HAT domain maps to 503-777 (PQVRCPSVIE…VDPECLRWTP (275 aa)). The interval 506 to 809 (RCPSVIEFGK…EPQGQERELE (304 aa)) is mediates interaction with BRPF1, required for histone H3 acetyltransferase activity. Residues 536-561 (LYLCEFCLKYMKSRTILQQHMKKCGW) form a C2HC MYST-type zinc finger. Position 603 is an N6-acetyllysine; by autocatalysis (K603). Residues 644-648 (SCIMI) and 653-659 (QRKGYGR) contribute to the acetyl-CoA site. E679 (proton donor/acceptor) is an active-site residue. S683 lines the acetyl-CoA pocket. Positions 784-939 (VVSEDEDEEA…DGKPDIPKGR (156 aa)) are disordered. S786 is modified (phosphoserine). The segment covering 786 to 798 (SEDEDEEADEGEK) has biased composition (acidic residues). Positions 799-841 (EEPQGQERELETRVKVGKSVSREKKDQESSSLIETDKKPEVKE) are enriched in basic and acidic residues. Residues K813 and K816 each carry the N6-acetyllysine modification. A Glycyl lysine isopeptide (Lys-Gly) (interchain with G-Cter in SUMO2) cross-link involves residue K836. Residues 866–875 (RRGRCGRKNR) are compositionally biased toward basic residues. Basic and acidic residues predominate over residues 876–890 (KTQERFGDKDSKMLV). Y901 carries the post-translational modification Phosphotyrosine. The span at 904 to 917 (CEEKSETSQERFTE) shows a compositional bias: basic and acidic residues. Residues S941 and S954 each carry the phosphoserine modification. Positions 983-1083 (GFSESSEEEE…EEEESELFPR (101 aa)) are disordered. K1007 bears the N6-acetyllysine mark. Residues 1009–1030 (TLKRKKPILHRRRRVRKRKHHN) show a composition bias toward basic residues. The span at 1031–1042 (SSVVTETISETT) shows a compositional bias: low complexity. Acidic residues-rich tracts occupy residues 1043–1053 (EVLDEPFEDSD) and 1065–1079 (FEME…EESE). S1090, S1091, and S1115 each carry phosphoserine. 5 disordered regions span residues 1096 to 1174 (RCQS…RKPG), 1197 to 1438 (IKPG…GAYQ), 1455 to 1533 (HTDE…PSVS), 1546 to 1568 (DLGS…STMG), and 1631 to 1707 (TCVV…CSMN). The span at 1107–1120 (EEEEEEEESDDADD) shows a compositional bias: acidic residues. A compositionally biased stretch (polar residues) spans 1136–1147 (NSASLEPDTSTP). A compositionally biased stretch (basic residues) spans 1148 to 1174 (MKKKKGWPKGKSRKPIHWKKRPGRKPG). The span at 1204–1229 (RTQENEEIVEVKEDLLEERKEEMHTE) shows a compositional bias: basic and acidic residues. Composition is skewed to acidic residues over residues 1230–1241 (PDEEAEEEEDTT) and 1282–1299 (EEPQ…DEVT). Residues 1317-1334 (HLDSLKTKEPEEQPARED) are compositionally biased toward basic and acidic residues. K1336 participates in a covalent cross-link: Glycyl lysine isopeptide (Lys-Gly) (interchain with G-Cter in SUMO2). 2 stretches are compositionally biased toward basic and acidic residues: residues 1352 to 1361 (DSRENTKDKD) and 1393 to 1414 (DSNT…HSEL). The segment covering 1473 to 1490 (HNSPISSIPSHPSQSVRS) has biased composition (low complexity). 2 stretches are compositionally biased toward polar residues: residues 1502–1523 (GYTQ…NMET) and 1550–1568 (IEST…STMG). Residues 1511–1636 (GSLSAPSMQN…KSPQTCVVER (126 aa)) are interaction with RUNX1-2. Positions 1511-1740 (GSLSAPSMQN…YERIPGDFGA (230 aa)) are interaction with PML. Composition is skewed to pro residues over residues 1640 to 1673 (NQQP…PPQP) and 1682 to 1698 (QPPP…PQQQ). Positions 1912–1947 (SMNMNTLNAMNSYRMTQPMMNSSYHSNPAYMNQTAQ) are required for activation of RUNX1-2.

This sequence belongs to the MYST (SAS/MOZ) family. In terms of assembly, component of the MOZ/MORF complex composed at least of ING5, KAT6A, KAT6B, MEAF6 and one of BRPF1, BRD1/BRPF2 and BRPF3. Interacts with RUNX2. Interacts with RUNX1; phosphorylation of RUNX1 enhances the interaction. Interacts with p53/TP53. Interacts with PML and this interaction positively regulates its acetylation activity towards p53/TP53. Autoacetylated. Autoacetylation at Lys-603 is required for proper function. In terms of processing, phosphorylation at Thr-369 by PKB/AKT1 inhibits its interaction with PML and negatively regulates its acetylation activity towards p53/TP53.

It localises to the nucleus. It is found in the nucleolus. The protein resides in the nucleoplasm. Its subcellular location is the PML body. The enzyme catalyses L-lysyl-[protein] + acetyl-CoA = N(6)-acetyl-L-lysyl-[protein] + CoA + H(+). Functionally, histone acetyltransferase that acetylates lysine residues in histone H3 and histone H4 (in vitro). Component of the MOZ/MORF complex which has a histone H3 acetyltransferase activity. May act as a transcriptional coactivator for RUNX1 and RUNX2. Acetylates p53/TP53 at 'Lys-120' and 'Lys-382' and controls its transcriptional activity via association with PML. This chain is Histone acetyltransferase KAT6A (Kat6a), found in Mus musculus (Mouse).